The sequence spans 97 residues: MLKMTLNNLQLFAHKKGGGSTSNGRDSQAKRLGAKAADGQTVTGGSILYRQRGTHIYPGVNVGRGGDDTLFAKVEGVVRFERKGRDKKQVSVYPIAK.

Positions 1–12 (MLKMTLNNLQLF) are excised as a propeptide. A disordered region spans residues 13-37 (AHKKGGGSTSNGRDSQAKRLGAKAA).

It belongs to the bacterial ribosomal protein bL27 family. The N-terminus is cleaved by ribosomal processing cysteine protease Prp.

The chain is Large ribosomal subunit protein bL27 from Streptococcus pneumoniae serotype 2 (strain D39 / NCTC 7466).